A 194-amino-acid chain; its full sequence is 13S globulin basic chain (194 aa).

One can recognise a Cupin type-1 domain in the interval 13–162 (ENIKSPQEAD…SFQISSEEAE (150 aa)).

The protein belongs to the 11S seed storage protein (globulins) family. Hexamer; each subunit is composed of an acidic and a basic chain derived from a single precursor and linked by a disulfide bond. In terms of tissue distribution, cotyledons and endosperm protein bodies.

Functionally, seed storage protein with a relatively high level of Lys and Met. The protein is 13S globulin basic chain of Fagopyrum esculentum (Common buckwheat).